A 117-amino-acid polypeptide reads, in one-letter code: Prefoldin subunit beta (117 aa).

It belongs to the prefoldin subunit beta family. As to quaternary structure, heterohexamer of two alpha and four beta subunits.

Its subcellular location is the cytoplasm. Molecular chaperone capable of stabilizing a range of proteins. Seems to fulfill an ATP-independent, HSP70-like function in archaeal de novo protein folding. In Methanosarcina mazei (strain ATCC BAA-159 / DSM 3647 / Goe1 / Go1 / JCM 11833 / OCM 88) (Methanosarcina frisia), this protein is Prefoldin subunit beta.